A 507-amino-acid polypeptide reads, in one-letter code: ATP synthase subunit alpha (507 aa).

168-175 is a binding site for ATP; sequence GDRQTGKT.

This sequence belongs to the ATPase alpha/beta chains family. As to quaternary structure, F-type ATPases have 2 components, CF(1) - the catalytic core - and CF(0) - the membrane proton channel. CF(1) has five subunits: alpha(3), beta(3), gamma(1), delta(1), epsilon(1). CF(0) has three main subunits: a(1), b(2) and c(9-12). The alpha and beta chains form an alternating ring which encloses part of the gamma chain. CF(1) is attached to CF(0) by a central stalk formed by the gamma and epsilon chains, while a peripheral stalk is formed by the delta and b chains.

The protein localises to the cell membrane. The enzyme catalyses ATP + H2O + 4 H(+)(in) = ADP + phosphate + 5 H(+)(out). In terms of biological role, produces ATP from ADP in the presence of a proton gradient across the membrane. The alpha chain is a regulatory subunit. The sequence is that of ATP synthase subunit alpha from Mesomycoplasma hyopneumoniae (strain 7448) (Mycoplasma hyopneumoniae).